Reading from the N-terminus, the 295-residue chain is Pantothenate synthetase (295 aa).

29–36 contacts ATP; the sequence is MGALHSGH. The active-site Proton donor is the His-36. Residue Gln-60 coordinates (R)-pantoate. Gln-60 is a beta-alanine binding site. 158-161 serves as a coordination point for ATP; the sequence is GQKD. Gln-164 contributes to the (R)-pantoate binding site. ATP-binding positions include Val-187 and 195–198; that span reads LSSR.

It belongs to the pantothenate synthetase family. Homodimer.

The protein localises to the cytoplasm. The enzyme catalyses (R)-pantoate + beta-alanine + ATP = (R)-pantothenate + AMP + diphosphate + H(+). It participates in cofactor biosynthesis; (R)-pantothenate biosynthesis; (R)-pantothenate from (R)-pantoate and beta-alanine: step 1/1. Its function is as follows. Catalyzes the condensation of pantoate with beta-alanine in an ATP-dependent reaction via a pantoyl-adenylate intermediate. The polypeptide is Pantothenate synthetase (Paenarthrobacter aurescens (strain TC1)).